A 407-amino-acid polypeptide reads, in one-letter code: Arginine deiminase (407 aa).

Cys397 acts as the Amidino-cysteine intermediate in catalysis.

It belongs to the arginine deiminase family.

It is found in the cytoplasm. It carries out the reaction L-arginine + H2O = L-citrulline + NH4(+). Its pathway is amino-acid degradation; L-arginine degradation via ADI pathway; carbamoyl phosphate from L-arginine: step 1/2. This is Arginine deiminase from Escherichia coli O81 (strain ED1a).